A 104-amino-acid polypeptide reads, in one-letter code: ATP-dependent Clp protease adapter protein ClpS (104 aa).

Belongs to the ClpS family. Binds to the N-terminal domain of the chaperone ClpA.

Functionally, involved in the modulation of the specificity of the ClpAP-mediated ATP-dependent protein degradation. The polypeptide is ATP-dependent Clp protease adapter protein ClpS (Desulforapulum autotrophicum (strain ATCC 43914 / DSM 3382 / VKM B-1955 / HRM2) (Desulfobacterium autotrophicum)).